The following is a 297-amino-acid chain: ClpXP adapter protein SpxH (297 aa).

Belongs to the SpxH family. In terms of assembly, interacts with Spx.

It localises to the cytoplasm. Its function is as follows. Adapter protein required for efficient degradation of Spx by ClpXP under non-stress conditions. Interaction with Spx stabilizes Spx and exposes the C-terminus of Spx for recognition and proteolysis by ClpXP. The sequence is that of ClpXP adapter protein SpxH from Bacillus cereus (strain ATCC 10987 / NRS 248).